The following is a 105-amino-acid chain: Malonate decarboxylase acyl carrier protein (105 aa).

Ser28 carries the post-translational modification O-(phosphoribosyl dephospho-coenzyme A)serine.

Belongs to the MdcC family. Covalently binds the prosthetic group of malonate decarboxylase.

The protein localises to the cytoplasm. Functionally, subunit of malonate decarboxylase, it is an acyl carrier protein to which acetyl and malonyl thioester residues are bound via a 2'-(5''-phosphoribosyl)-3'-dephospho-CoA prosthetic group and turn over during the catalytic mechanism. This Xanthomonas euvesicatoria pv. vesicatoria (strain 85-10) (Xanthomonas campestris pv. vesicatoria) protein is Malonate decarboxylase acyl carrier protein.